The following is a 361-amino-acid chain: Peptide chain release factor 1 (361 aa).

Glutamine 235 carries the post-translational modification N5-methylglutamine.

Belongs to the prokaryotic/mitochondrial release factor family. Post-translationally, methylated by PrmC. Methylation increases the termination efficiency of RF1.

Its subcellular location is the cytoplasm. Its function is as follows. Peptide chain release factor 1 directs the termination of translation in response to the peptide chain termination codons UAG and UAA. This chain is Peptide chain release factor 1, found in Rhodopseudomonas palustris (strain ATCC BAA-98 / CGA009).